The sequence spans 407 residues: Imidazolonepropionase (407 aa).

H68 and H70 together coordinate Fe(3+). The Zn(2+) site is built by H68 and H70. 4-imidazolone-5-propanoate-binding residues include R77, Y140, and H173. Y140 contacts N-formimidoyl-L-glutamate. Residue H236 coordinates Fe(3+). H236 provides a ligand contact to Zn(2+). Q239 is a binding site for 4-imidazolone-5-propanoate. Position 311 (D311) interacts with Fe(3+). D311 provides a ligand contact to Zn(2+). N-formimidoyl-L-glutamate-binding residues include N313 and G315. 4-imidazolone-5-propanoate is bound at residue T316.

Belongs to the metallo-dependent hydrolases superfamily. HutI family. The cofactor is Zn(2+). Requires Fe(3+) as cofactor.

It localises to the cytoplasm. The enzyme catalyses 4-imidazolone-5-propanoate + H2O = N-formimidoyl-L-glutamate. It participates in amino-acid degradation; L-histidine degradation into L-glutamate; N-formimidoyl-L-glutamate from L-histidine: step 3/3. Functionally, catalyzes the hydrolytic cleavage of the carbon-nitrogen bond in imidazolone-5-propanoate to yield N-formimidoyl-L-glutamate. It is the third step in the universal histidine degradation pathway. In Stenotrophomonas maltophilia (strain R551-3), this protein is Imidazolonepropionase.